A 354-amino-acid polypeptide reads, in one-letter code: Histidinol-phosphate aminotransferase (354 aa).

K210 is modified (N6-(pyridoxal phosphate)lysine).

It belongs to the class-II pyridoxal-phosphate-dependent aminotransferase family. Histidinol-phosphate aminotransferase subfamily. Homodimer. The cofactor is pyridoxal 5'-phosphate.

The catalysed reaction is L-histidinol phosphate + 2-oxoglutarate = 3-(imidazol-4-yl)-2-oxopropyl phosphate + L-glutamate. It functions in the pathway amino-acid biosynthesis; L-histidine biosynthesis; L-histidine from 5-phospho-alpha-D-ribose 1-diphosphate: step 7/9. The sequence is that of Histidinol-phosphate aminotransferase from Clostridium botulinum (strain 657 / Type Ba4).